Reading from the N-terminus, the 174-residue chain is Co-chaperone protein HscB homolog (174 aa).

One can recognise a J domain in the interval Asn2–Leu74.

The protein belongs to the HscB family. As to quaternary structure, interacts with HscA and stimulates its ATPase activity.

In terms of biological role, co-chaperone involved in the maturation of iron-sulfur cluster-containing proteins. Seems to help targeting proteins to be folded toward HscA. This chain is Co-chaperone protein HscB homolog, found in Shewanella baltica (strain OS223).